Here is a 326-residue protein sequence, read N- to C-terminus: Metallophosphoesterase domain-containing protein 1 (326 aa).

The protein belongs to the UPF0046 family. Expressed predominantly in adult brain.

Functionally, may have metallophosphoesterase activity (in vitro). In Homo sapiens (Human), this protein is Metallophosphoesterase domain-containing protein 1 (MPPED1).